A 63-amino-acid chain; its full sequence is Large ribosomal subunit protein uL29 (63 aa).

It belongs to the universal ribosomal protein uL29 family.

This chain is Large ribosomal subunit protein uL29, found in Chromohalobacter salexigens (strain ATCC BAA-138 / DSM 3043 / CIP 106854 / NCIMB 13768 / 1H11).